The following is a 307-amino-acid chain: Protease HtpX homolog (307 aa).

Transmembrane regions (helical) follow at residues 10-30 (VITILAGIGIALLFSLIAYGL) and 40-60 (ISIIYFLLIFVLFIDIIQWLV). Zn(2+) is bound at residue histidine 144. Residue glutamate 145 is part of the active site. Histidine 148 provides a ligand contact to Zn(2+). The next 2 helical transmembrane spans lie at 156 to 176 (LLLAIGLIPTLIFYLGYSMIF) and 187 to 207 (FFLVAIILFILSSVFNIMILG). Glutamate 213 serves as a coordination point for Zn(2+).

It belongs to the peptidase M48B family. Requires Zn(2+) as cofactor.

Its subcellular location is the cell membrane. This is Protease HtpX homolog from Picrophilus torridus (strain ATCC 700027 / DSM 9790 / JCM 10055 / NBRC 100828 / KAW 2/3).